The sequence spans 956 residues: Run domain Beclin-1-interacting and cysteine-rich domain-containing protein (956 aa).

Residues 49–190 enclose the RUN domain; the sequence is WSKYGGLERL…PRLLAQIDAS (142 aa). An interaction with PIK3C3 region spans residues 50 to 181; it reads SKYGGLERLC…CLEAVEQNNP (132 aa). Phosphoserine is present on Ser-198. Positions 205–437 are interaction with YWHAB; that stretch reads SQSLTALPGS…ITIIVEDPIA (233 aa). Low complexity predominate over residues 233 to 242; that stretch reads SLQSMPQSSH. A disordered region spans residues 233–423; the sequence is SLQSMPQSSH…TNIASRGAAG (191 aa). Phosphoserine occurs at positions 250 and 268. Residues 270–319 are compositionally biased toward polar residues; that stretch reads AETQTTPAPLPSDSTLAQDSPLTAQEMSDSTLTSPLEASWVSSQNDSPSD. Positions 302–585 are interaction with UVRAG; sequence TSPLEASWVS…DLEIQDADIR (284 aa). Low complexity predominate over residues 339-371; it reads ASCESHSSNGESSSSHLFSSSSSQKLESAASSL. Residues 379-395 are compositionally biased toward polar residues; that stretch reads QSQAGSVLRRSSFSEGQ. Residues Ser-390, Ser-412, Ser-513, and Ser-547 each carry the phosphoserine modification. The tract at residues 490 to 542 is interaction with BECN1; the sequence is AIELMKCNMMSQCLEEEEVEEEDSDREIQELKQKIRLRRQQIRTKNLLPAYRE. The segment covering 547-566 has biased composition (low complexity); that stretch reads SFRVTSSSSQFSSRDSTQLS. The interval 547 to 579 is disordered; that stretch reads SFRVTSSSSQFSSRDSTQLSESGSAEDADDLEI. The segment at 552-609 is interaction with CYBA; it reads SSSSQFSSRDSTQLSESGSAEDADDLEIQDADIRRSAVSNGKSSFSQNLSHCFLHSTS. Residues 570-579 show a composition bias toward acidic residues; that stretch reads SAEDADDLEI. The residue at position 655 (Ser-655) is a Phosphoserine. An interaction with CARD9 region spans residues 656-744; sequence PDDGQHADIY…HENAQMVVPS (89 aa). The interval 705-956 is interaction with Rab7; it reads CAGCGIRTDP…ALEATVLETT (252 aa).

As to quaternary structure, associates with PI3K (PI3KC3/PI3K-III/class III phosphatidylinositol 3-kinase) complex II (PI3KC3-C2) in which the core composed of the catalytic subunit PIK3C3, the regulatory subunit PIK3R4 and BECN1 is associated with UVRAG; in the complex interacts directly with PI3KC3 and UVRAG. Interacts with Rab7 (RAB7A or RAB7B) (GTP-bound form); Rab7 and UVRAG compete for RUBCN binding; can interact simultaneously with Rab7 and the PI3K complex. Interacts with CYBA and CYBB; indicative for the association with the CYBA:CYBB NADPH oxidase heterodimer. Interacts with NOX4 and probably associates with the CYBA:NOX4 complex. Interacts with YWHAB and CARD9 in a competitive and stimulation-dependent manner; RUBCN exchanges interaction from YWHAB to CARD9 upon stimulation with beta-1,3-glucan.

Its subcellular location is the late endosome. The protein resides in the lysosome. It is found in the early endosome. In terms of biological role, inhibits PIK3C3 activity; under basal conditions negatively regulates PI3K complex II (PI3KC3-C2) function in autophagy. Negatively regulates endosome maturation and degradative endocytic trafficking and impairs autophagosome maturation process. Can sequester UVRAG from association with a class C Vps complex (possibly the HOPS complex) and negatively regulates Rab7 activation. Involved in regulation of pathogen-specific host defense of activated macrophages. Following bacterial infection promotes NADH oxidase activity by association with CYBA thereby affecting TLR2 signaling and probably other TLR-NOX pathways. Stabilizes the CYBA:CYBB NADPH oxidase heterodimer, increases its association with TLR2 and its phagosome trafficking to induce antimicrobial burst of ROS and production of inflammatory cytokines. Following fungal or viral infection (implicating CLEC7A (dectin-1)-mediated myeloid cell activation or RIGI-dependent sensing of RNA viruses) negatively regulates pro-inflammatory cytokine production by association with CARD9 and sequestering it from signaling complexes. In Mus musculus (Mouse), this protein is Run domain Beclin-1-interacting and cysteine-rich domain-containing protein.